A 97-amino-acid polypeptide reads, in one-letter code: Apolipoprotein C-II (97 aa).

Residues 1-22 (MGSRFFLALFLVLLVLGNEVQG) form the signal peptide. Positions 63-71 (SVDEKLRDM) are lipid binding. Residues 75-97 (SSAAMSTYAGIFTDQLLTLLKGE) form a lipoprotein lipase cofactor region.

This sequence belongs to the apolipoprotein C2 family. Proapolipoprotein C-II is synthesized as a sialic acid containing glycoprotein which is subsequently desialylated prior to its proteolytic processing. In terms of processing, proapolipoprotein C-II, the major form found in plasma undergoes proteolytic cleavage of its N-terminal hexapeptide to generate the mature form apolipoprotein C-II, which occurs as the minor form in plasma.

It is found in the secreted. Functionally, component of chylomicrons, very low-density lipoproteins (VLDL), low-density lipoproteins (LDL), and high-density lipoproteins (HDL) in plasma. Plays an important role in lipoprotein metabolism as an activator of lipoprotein lipase. This Grammomys surdaster (African woodland thicket rat) protein is Apolipoprotein C-II (Apoc2).